The sequence spans 262 residues: tRNA pseudouridine synthase A (262 aa).

Asp-52 functions as the Nucleophile in the catalytic mechanism. Residue Tyr-110 participates in substrate binding.

The protein belongs to the tRNA pseudouridine synthase TruA family. Homodimer.

The enzyme catalyses uridine(38/39/40) in tRNA = pseudouridine(38/39/40) in tRNA. Functionally, formation of pseudouridine at positions 38, 39 and 40 in the anticodon stem and loop of transfer RNAs. This Chromobacterium violaceum (strain ATCC 12472 / DSM 30191 / JCM 1249 / CCUG 213 / NBRC 12614 / NCIMB 9131 / NCTC 9757 / MK) protein is tRNA pseudouridine synthase A.